The primary structure comprises 901 residues: Protein translocase subunit SecA (901 aa).

ATP-binding positions include Q85, 103–107, and D510; that span reads GEGKT. The segment covering 836–845 has biased composition (basic and acidic residues); sequence EEAERARQEM. The segment at 836–901 is disordered; sequence EEAERARQEM…HCHGSRVARQ (66 aa). Residues 849–866 are compositionally biased toward polar residues; sequence INQNNLPVDENSQTTQNS. Positions 882, 884, 893, and 894 each coordinate Zn(2+). Over residues 888 to 901 the composition is skewed to basic residues; that stretch reads KKYKHCHGSRVARQ.

The protein belongs to the SecA family. As to quaternary structure, monomer and homodimer. Part of the essential Sec protein translocation apparatus which comprises SecA, SecYEG and auxiliary proteins SecDF-YajC and YidC. It depends on Zn(2+) as a cofactor.

The protein resides in the cell inner membrane. It localises to the cytoplasm. The catalysed reaction is ATP + H2O + cellular proteinSide 1 = ADP + phosphate + cellular proteinSide 2.. Functionally, part of the Sec protein translocase complex. Interacts with the SecYEG preprotein conducting channel. Has a central role in coupling the hydrolysis of ATP to the transfer of proteins into and across the cell membrane, serving both as a receptor for the preprotein-SecB complex and as an ATP-driven molecular motor driving the stepwise translocation of polypeptide chains across the membrane. This chain is Protein translocase subunit SecA, found in Haemophilus influenzae (strain PittEE).